Reading from the N-terminus, the 831-residue chain is G-type lectin S-receptor-like serine/threonine-protein kinase At1g61390 (831 aa).

A signal peptide spans 1–42 (MYKLPQRNCADKQEYTVHMRKMGMVIFACLLLLIIFPTFGYA). The 120-residue stretch at 43-162 (DINTSSPLSI…VSGKTLWKSF (120 aa)) folds into the Bulb-type lectin domain. Topologically, residues 43–448 (DINTSSPLSI…SSELAGSNRT (406 aa)) are extracellular. N-linked (GlcNAc...) asparagine glycosylation is found at Asn-45, Asn-71, Asn-106, and Asn-112. The EGF-like; atypical domain maps to 298–334 (PTSSCDLYRACGPFGLCVRSRNPKCICLKGFVPKSDD). 2 cysteine pairs are disulfide-bonded: Cys-302-Cys-314 and Cys-308-Cys-322. Asn-340, Asn-356, Asn-399, and Asn-446 each carry an N-linked (GlcNAc...) asparagine glycan. The 87-residue stretch at 353-439 (CHTNSSTKTQ…GESLSLRLAS (87 aa)) folds into the PAN domain. 2 disulfide bridges follow: Cys-392–Cys-413 and Cys-396–Cys-402. A helical transmembrane segment spans residues 449 to 469 (KIILGTTVSLSIFVILVFAAY). The Cytoplasmic portion of the chain corresponds to 470-831 (KSWRYRTKQN…EITQSVIQGR (362 aa)). The 284-residue stretch at 520–803 (FSSSNKLGQG…ELPSPKQPTF (284 aa)) folds into the Protein kinase domain. Residues 526 to 534 (LGQGGFGPV) and Lys-548 contribute to the ATP site. Ser-554 and Ser-569 each carry phosphoserine. A caM-binding region spans residues 609-626 (TLKFEIDWQKRFNIIQGV). The active-site Proton acceptor is the Asp-645. Ser-649 and Ser-662 each carry phosphoserine. Thr-679 is modified (phosphothreonine). Residues Ser-722 and Ser-814 each carry the phosphoserine modification.

It belongs to the protein kinase superfamily. Ser/Thr protein kinase family.

The protein localises to the cell membrane. It catalyses the reaction L-seryl-[protein] + ATP = O-phospho-L-seryl-[protein] + ADP + H(+). The enzyme catalyses L-threonyl-[protein] + ATP = O-phospho-L-threonyl-[protein] + ADP + H(+). This chain is G-type lectin S-receptor-like serine/threonine-protein kinase At1g61390, found in Arabidopsis thaliana (Mouse-ear cress).